A 343-amino-acid chain; its full sequence is ATP-dependent 6-phosphofructokinase (343 aa).

ATP contacts are provided by residues Gly-10 and 103 to 106; that span reads GEGT. Mg(2+) is bound at residue Glu-104. Substrate-binding positions include 126-128, Arg-163, 170-172, Glu-223, Arg-267, and 273-276; these read TID, MGR, and HVQR. The active-site Proton acceptor is the Asp-128.

The protein belongs to the phosphofructokinase type A (PFKA) family. Mixed-substrate PFK group III subfamily. Homodimer or homotetramer. Mg(2+) serves as cofactor.

It localises to the cytoplasm. The catalysed reaction is beta-D-fructose 6-phosphate + ATP = beta-D-fructose 1,6-bisphosphate + ADP + H(+). It participates in carbohydrate degradation; glycolysis; D-glyceraldehyde 3-phosphate and glycerone phosphate from D-glucose: step 3/4. Catalyzes the phosphorylation of D-fructose 6-phosphate to fructose 1,6-bisphosphate by ATP, the first committing step of glycolysis. The sequence is that of ATP-dependent 6-phosphofructokinase from Mycobacterium leprae (strain TN).